The chain runs to 220 residues: Nicotinamidase (220 aa).

The active site involves aspartate 11. The Zn(2+) site is built by aspartate 53, histidine 55, and histidine 94. Lysine 119 is a catalytic residue. The Nucleophile role is filled by cysteine 163.

This sequence belongs to the isochorismatase family.

Its subcellular location is the cytoplasm. It is found in the nucleus. The protein localises to the peroxisome. It carries out the reaction nicotinamide + H2O = nicotinate + NH4(+). The protein operates within cofactor biosynthesis; nicotinate biosynthesis; nicotinate from nicotinamide: step 1/1. Catalyzes the deamidation of nicotinamide, an early step in the NAD(+) salvage pathway. The sequence is that of Nicotinamidase (pnc1) from Schizosaccharomyces pombe (strain 972 / ATCC 24843) (Fission yeast).